The primary structure comprises 324 residues: Phospho-N-acetylmuramoyl-pentapeptide-transferase (324 aa).

A run of 10 helical transmembrane segments spans residues Thr9 to Val29, Thr53 to Ile73, Val77 to Leu97, Phe117 to Ala137, Ile147 to Ser167, Leu176 to Phe196, Met201 to Asn221, Ile227 to Leu247, Leu253 to Phe273, and Val304 to Phe324.

Belongs to the glycosyltransferase 4 family. MraY subfamily. Requires Mg(2+) as cofactor.

It is found in the cell membrane. It catalyses the reaction UDP-N-acetyl-alpha-D-muramoyl-L-alanyl-gamma-D-glutamyl-meso-2,6-diaminopimeloyl-D-alanyl-D-alanine + di-trans,octa-cis-undecaprenyl phosphate = di-trans,octa-cis-undecaprenyl diphospho-N-acetyl-alpha-D-muramoyl-L-alanyl-D-glutamyl-meso-2,6-diaminopimeloyl-D-alanyl-D-alanine + UMP. The protein operates within cell wall biogenesis; peptidoglycan biosynthesis. Its function is as follows. Catalyzes the initial step of the lipid cycle reactions in the biosynthesis of the cell wall peptidoglycan: transfers peptidoglycan precursor phospho-MurNAc-pentapeptide from UDP-MurNAc-pentapeptide onto the lipid carrier undecaprenyl phosphate, yielding undecaprenyl-pyrophosphoryl-MurNAc-pentapeptide, known as lipid I. The polypeptide is Phospho-N-acetylmuramoyl-pentapeptide-transferase (Listeria monocytogenes serotype 4b (strain CLIP80459)).